We begin with the raw amino-acid sequence, 283 residues long: Formamidopyrimidine-DNA glycosylase (283 aa).

The Schiff-base intermediate with DNA role is filled by Pro-2. The active-site Proton donor is Glu-3. Catalysis depends on Lys-58, which acts as the Proton donor; for beta-elimination activity. DNA is bound by residues His-100, Arg-119, and Arg-162. An FPG-type zinc finger spans residues Asp-247–Arg-283. Catalysis depends on Arg-273, which acts as the Proton donor; for delta-elimination activity.

The protein belongs to the FPG family. In terms of assembly, monomer. Requires Zn(2+) as cofactor.

It catalyses the reaction Hydrolysis of DNA containing ring-opened 7-methylguanine residues, releasing 2,6-diamino-4-hydroxy-5-(N-methyl)formamidopyrimidine.. It carries out the reaction 2'-deoxyribonucleotide-(2'-deoxyribose 5'-phosphate)-2'-deoxyribonucleotide-DNA = a 3'-end 2'-deoxyribonucleotide-(2,3-dehydro-2,3-deoxyribose 5'-phosphate)-DNA + a 5'-end 5'-phospho-2'-deoxyribonucleoside-DNA + H(+). Functionally, involved in base excision repair of DNA damaged by oxidation or by mutagenic agents. Acts as a DNA glycosylase that recognizes and removes damaged bases. Has a preference for oxidized purines, such as 7,8-dihydro-8-oxoguanine (8-oxoG). Has AP (apurinic/apyrimidinic) lyase activity and introduces nicks in the DNA strand. Cleaves the DNA backbone by beta-delta elimination to generate a single-strand break at the site of the removed base with both 3'- and 5'-phosphates. The sequence is that of Formamidopyrimidine-DNA glycosylase from Ruegeria sp. (strain TM1040) (Silicibacter sp.).